The following is a 1280-amino-acid chain: Multidrug resistance protein 1 (1280 aa).

Topologically, residues 1–72 (MSRAHAAYAN…YADATDRVLM (72 aa)) are cytoplasmic. The region spanning 72–357 (MIAGTAFAVA…VAPSRTAFTE (286 aa)) is the ABC transmembrane type-1 1 domain. 6 consecutive transmembrane segments (helical) span residues 73–93 (IAGTAFAVACGAGMPVFSFIF), 120–140 (YVGIAMLIACAGHVMCWTVAA), 189–209 (KLSQGIMNGSMGVIGYIAGFV), 216–236 (LMMIGMMPFIIVMAAIIGSIV), 297–317 (LSAAVIMALMYVSYTVAFFFG), and 326–345 (RDMADIISTFLAVLMGSFGL). The Cytoplasmic portion of the chain corresponds to 346–712 (GFVAPSRTAF…MRMNKDKAWA (367 aa)). Residues 391–634 (IEFRNVRFAY…DGEFAAVAKM (244 aa)) enclose the ABC transporter 1 domain. 426–433 (GASGCGKS) lines the ATP pocket. The next 6 membrane-spanning stretches (helical) occupy residues 713–733 (VALGILSSVVIGSARPASSIV), 762–781 (PLFIVFAVANFSGWILHGFY), 837–857 (IGLKVQTMCIIASGLVVGFIY), 858–878 (QWKLALVALACMPLMIGCSLT), 938–958 (IIAGGIYGITQFIFYGVYALC), and 976–996 (VMIASMSILFGAQNAGEAGAF). One can recognise an ABC transmembrane type-1 2 domain in the interval 713–1002 (VALGILSSVV…AGAFATKLAD (290 aa)). Residues 1036-1274 (IEYRNVQFIY…GGEYKTRYDL (239 aa)) form the ABC transporter 2 domain. Position 1071–1078 (1071–1078 (GQTGCGKS)) interacts with ATP. N-linked (GlcNAc...) asparagine glycosylation is present at N1113.

It belongs to the ABC transporter superfamily. ABCB family. Multidrug resistance exporter (TC 3.A.1.201) subfamily.

Its subcellular location is the membrane. The catalysed reaction is ATP + H2O + xenobioticSide 1 = ADP + phosphate + xenobioticSide 2.. Its function is as follows. Energy-dependent efflux pump responsible for decreased drug accumulation in multi-drug-resistant cells. Confers vinblastine resistance. This is Multidrug resistance protein 1 (MDR1) from Leishmania enriettii.